The sequence spans 572 residues: MRRKRDSYDYVIIGGGSAGSVLGARLSEDKDKNVLVLEAGRSDYFWDLFIQMPAALMFPSGNRFYDWEYQTDEEPHMGRRVDHARGKVLGGSSSINGMIYQRGNPMDYEGWAEPEGMDTWDFAHCLPYFKKLETTYGAAPYDKVRGHDGPIKLKRGPATNPLFKSFFNAGVEAGYHKTADVNGYRQEGFGPFDSQVHHGRRMSASRAYLRPALRRRNLDVETRAFVTKLIFDENNSKKVTGVTFKKNGKEHTVHANEVILSGGAFNTPQLLQLSGIGDSEFLKSKGIEPRMHLPGVGENFEDHLEVYIQHKCKQPVSLQPSLDVKRMPFIGLQWIFARKGAAASNHFEGGGFVRSNDDVDYPNLMFHFLPIAVRYDGQKAPVAHGYQVHVGPMYSNSRGSLKIKSKDPFEKPSIVFNYLSTKEDEREWVEAIRVARNILKQKAMDPFNGGEISPGPQVQTDEEILDWVRKDGETALHPSCSAKMGPASDPMAVVDPLTMKVHGMENLRVVDASAMPRTTNGNIHAPVLMLAEKAADIIRGRKPLEPQYVDYYKHGIDDEKAGAMEDDPFYQY.

FAD is bound at residue 9-38 (DYVIIGGGSAGSVLGARLSEDKDKNVLVLE). His-477 acts as the Proton acceptor in catalysis.

Belongs to the GMC oxidoreductase family. Requires FAD as cofactor.

It carries out the reaction choline + A = betaine aldehyde + AH2. It catalyses the reaction betaine aldehyde + NAD(+) + H2O = glycine betaine + NADH + 2 H(+). It participates in amine and polyamine biosynthesis; betaine biosynthesis via choline pathway; betaine aldehyde from choline (cytochrome c reductase route): step 1/1. Functionally, involved in the biosynthesis of the osmoprotectant glycine betaine. Catalyzes the oxidation of choline to betaine aldehyde and betaine aldehyde to glycine betaine at the same rate. The chain is Oxygen-dependent choline dehydrogenase from Staphylococcus epidermidis (strain ATCC 12228 / FDA PCI 1200).